Consider the following 77-residue polypeptide: Acyl carrier protein (77 aa).

A Carrier domain is found at 1-77 (MSVEAKVKKI…DAIEYIRKKS (77 aa)). An O-(pantetheine 4'-phosphoryl)serine modification is found at S37.

The protein belongs to the acyl carrier protein (ACP) family. 4'-phosphopantetheine is transferred from CoA to a specific serine of apo-ACP by AcpS. This modification is essential for activity because fatty acids are bound in thioester linkage to the sulfhydryl of the prosthetic group.

The protein localises to the cytoplasm. It participates in lipid metabolism; fatty acid biosynthesis. Its function is as follows. Carrier of the growing fatty acid chain in fatty acid biosynthesis. This chain is Acyl carrier protein, found in Desulforapulum autotrophicum (strain ATCC 43914 / DSM 3382 / VKM B-1955 / HRM2) (Desulfobacterium autotrophicum).